Consider the following 101-residue polypeptide: Large ribosomal subunit protein uL24 (101 aa).

This sequence belongs to the universal ribosomal protein uL24 family. As to quaternary structure, part of the 50S ribosomal subunit.

One of two assembly initiator proteins, it binds directly to the 5'-end of the 23S rRNA, where it nucleates assembly of the 50S subunit. In terms of biological role, one of the proteins that surrounds the polypeptide exit tunnel on the outside of the subunit. This is Large ribosomal subunit protein uL24 from Streptococcus equi subsp. zooepidemicus (strain H70).